The chain runs to 284 residues: Shikimate dehydrogenase (NADP(+)) (284 aa).

Shikimate-binding positions include 20-22 (SIS) and S67. Catalysis depends on K71, which acts as the Proton acceptor. D83 contributes to the NADP(+) binding site. Positions 92 and 107 each coordinate shikimate. NADP(+) is bound by residues 129-133 (GAGGA) and I227. Y229 is a shikimate binding site. G250 contributes to the NADP(+) binding site.

This sequence belongs to the shikimate dehydrogenase family. Homodimer.

It carries out the reaction shikimate + NADP(+) = 3-dehydroshikimate + NADPH + H(+). The protein operates within metabolic intermediate biosynthesis; chorismate biosynthesis; chorismate from D-erythrose 4-phosphate and phosphoenolpyruvate: step 4/7. Functionally, involved in the biosynthesis of the chorismate, which leads to the biosynthesis of aromatic amino acids. Catalyzes the reversible NADPH linked reduction of 3-dehydroshikimate (DHSA) to yield shikimate (SA). In Streptococcus pneumoniae (strain ATCC 700669 / Spain 23F-1), this protein is Shikimate dehydrogenase (NADP(+)).